Reading from the N-terminus, the 132-residue chain is Gonadotropin subunit beta-1 (132 aa).

A signal peptide spans 1 to 17 (MMRGVTMVLLLPMLVWA). 5 cysteine pairs are disulfide-bonded: cysteine 25–cysteine 73, cysteine 39–cysteine 88, cysteine 50–cysteine 104, cysteine 54–cysteine 106, and cysteine 109–cysteine 116. Asparagine 29 and asparagine 46 each carry an N-linked (GlcNAc...) asparagine glycan.

Belongs to the glycoprotein hormones subunit beta family. As to quaternary structure, heterodimer of an alpha and a beta chain.

It is found in the secreted. Its function is as follows. Involved in gametogenesis and steroidogenesis. The polypeptide is Gonadotropin subunit beta-1 (cgba) (Ictalurus punctatus (Channel catfish)).